The primary structure comprises 250 residues: Triosephosphate isomerase (250 aa).

Residues N10 and K12 each coordinate substrate. H94 functions as the Electrophile in the catalytic mechanism. The Proton acceptor role is filled by E167.

Belongs to the triosephosphate isomerase family. Homodimer.

It is found in the cytoplasm. The enzyme catalyses D-glyceraldehyde 3-phosphate = dihydroxyacetone phosphate. It functions in the pathway carbohydrate biosynthesis; gluconeogenesis. Its pathway is carbohydrate degradation; glycolysis; D-glyceraldehyde 3-phosphate from glycerone phosphate: step 1/1. This is Triosephosphate isomerase from Taenia solium (Pork tapeworm).